A 478-amino-acid polypeptide reads, in one-letter code: Membrane-bound lytic murein transglycosylase F (478 aa).

A signal peptide spans 1–22; the sequence is MTRFLFAIILGLLLTACQQETV. Positions 23-257 are non-LT domain; that stretch reads EETEFVPHKL…HLNEKYFGHV (235 aa). The segment at 258-478 is LT domain; that stretch reads KRFDYIDTRA…PGTLSPDKPK (221 aa). Residue Glu302 is part of the active site. The segment at 447 to 478 is disordered; sequence KQQNSEEVAPSDLTAEETPVPAPGTLSPDKPK.

In the N-terminal section; belongs to the bacterial solute-binding protein 3 family. This sequence in the C-terminal section; belongs to the transglycosylase Slt family.

It localises to the cell outer membrane. It carries out the reaction Exolytic cleavage of the (1-&gt;4)-beta-glycosidic linkage between N-acetylmuramic acid (MurNAc) and N-acetylglucosamine (GlcNAc) residues in peptidoglycan, from either the reducing or the non-reducing ends of the peptidoglycan chains, with concomitant formation of a 1,6-anhydrobond in the MurNAc residue.. Murein-degrading enzyme that degrades murein glycan strands and insoluble, high-molecular weight murein sacculi, with the concomitant formation of a 1,6-anhydromuramoyl product. Lytic transglycosylases (LTs) play an integral role in the metabolism of the peptidoglycan (PG) sacculus. Their lytic action creates space within the PG sacculus to allow for its expansion as well as for the insertion of various structures such as secretion systems and flagella. The polypeptide is Membrane-bound lytic murein transglycosylase F (Shewanella oneidensis (strain ATCC 700550 / JCM 31522 / CIP 106686 / LMG 19005 / NCIMB 14063 / MR-1)).